Reading from the N-terminus, the 511-residue chain is Putative thymidine phosphorylase (511 aa).

The protein belongs to the thymidine/pyrimidine-nucleoside phosphorylase family. Type 2 subfamily.

It carries out the reaction thymidine + phosphate = 2-deoxy-alpha-D-ribose 1-phosphate + thymine. This Polaromonas sp. (strain JS666 / ATCC BAA-500) protein is Putative thymidine phosphorylase.